A 217-amino-acid chain; its full sequence is MKYQLTAHEARVIGCLLEKQVTTPEQYPLSVNAVVTACNQKTNREPVMSLSEGEVQTLLDTLVKRHYLRTVSGFGNRVTKYEQRFCNSEFGDLKLSAGEVAVVTTLLLRGAQTPGELRSRAQRMHEFSDMAEVESVLEGLATREDGPFVARLPREPGKRESRYMHLFCDDMDTLITTVEALSPLEDDDDLRARVEALEGEVAELKARLDSLLHHLGD.

Belongs to the UPF0502 family.

This chain is UPF0502 protein KPK_3478, found in Klebsiella pneumoniae (strain 342).